The primary structure comprises 544 residues: Chaperonin GroEL 2 (544 aa).

Residues 29-32 (TLGP), 86-90 (DGTTT), G413, and D495 contribute to the ATP site. Positions 525-544 (PEPKSNKPAGGGGGVDDYDY) are disordered. The segment covering 533–544 (AGGGGGVDDYDY) has biased composition (gly residues).

The protein belongs to the chaperonin (HSP60) family. Forms a cylinder of 14 subunits composed of two heptameric rings stacked back-to-back. Interacts with the co-chaperonin GroES.

Its subcellular location is the cytoplasm. The enzyme catalyses ATP + H2O + a folded polypeptide = ADP + phosphate + an unfolded polypeptide.. Its function is as follows. Together with its co-chaperonin GroES, plays an essential role in assisting protein folding. The GroEL-GroES system forms a nano-cage that allows encapsulation of the non-native substrate proteins and provides a physical environment optimized to promote and accelerate protein folding. This chain is Chaperonin GroEL 2, found in Synechococcus sp. (strain JA-3-3Ab) (Cyanobacteria bacterium Yellowstone A-Prime).